The chain runs to 508 residues: Probable glycine dehydrogenase (decarboxylating) subunit 2 (508 aa).

N6-(pyridoxal phosphate)lysine is present on Lys277.

This sequence belongs to the GcvP family. C-terminal subunit subfamily. The glycine cleavage system is composed of four proteins: P, T, L and H. In this organism, the P 'protein' is a heterodimer of two subunits. Pyridoxal 5'-phosphate is required as a cofactor.

The catalysed reaction is N(6)-[(R)-lipoyl]-L-lysyl-[glycine-cleavage complex H protein] + glycine + H(+) = N(6)-[(R)-S(8)-aminomethyldihydrolipoyl]-L-lysyl-[glycine-cleavage complex H protein] + CO2. Its function is as follows. The glycine cleavage system catalyzes the degradation of glycine. The P protein binds the alpha-amino group of glycine through its pyridoxal phosphate cofactor; CO(2) is released and the remaining methylamine moiety is then transferred to the lipoamide cofactor of the H protein. The sequence is that of Probable glycine dehydrogenase (decarboxylating) subunit 2 from Saccharolobus solfataricus (strain ATCC 35092 / DSM 1617 / JCM 11322 / P2) (Sulfolobus solfataricus).